A 728-amino-acid chain; its full sequence is Meiotic sister-chromatid recombination protein 3 (728 aa).

Disordered regions lie at residues 33-171 (QLSA…GRTQ), 236-261 (NETD…LNVE), 300-335 (PTHQ…EAEA), 363-403 (SDNA…VKSN), 422-454 (SAPH…ANTG), 495-514 (VGVS…QHYL), and 561-728 (YGYQ…KSSR). Positions 35–46 (SAAAASAASAAS) are enriched in low complexity. A compositionally biased stretch (polar residues) spans 48–58 (DRTNYSRSHSL). A phosphoserine mark is found at S57 and S64. Positions 80 to 93 (STSSAAPPTSRAAA) are enriched in low complexity. 3 stretches are compositionally biased toward polar residues: residues 95-106 (QYSQKTYSLRSQ), 118-132 (YTTN…TSGA), and 140-171 (KNKS…GRTQ). S127, S151, and S155 each carry phosphoserine. Positions 251–261 (HLQDDSELNVE) are enriched in basic and acidic residues. The span at 309-326 (IHNKRKQASTTRRKKRPP) shows a compositional bias: basic residues. S363 bears the Phosphoserine mark. 2 stretches are compositionally biased toward polar residues: residues 363-373 (SDNASAPLGSN) and 385-403 (TLRS…VKSN). Positions 590–634 (EGVTTAKPSSNEGVMTNPVVTDSPSPLQQQIDSTTASSNGQSQGN) are enriched in polar residues. A compositionally biased stretch (low complexity) spans 635–646 (VPTSAVASTTRT). A Phosphothreonine modification is found at T646. Polar residues-rich tracts occupy residues 654 to 668 (NLKS…QTPQ), 675 to 684 (DPTTSSTNEL), and 691 to 708 (MVTS…TQDP). S660 is subject to Phosphoserine. Positions 711–728 (KHKKSSFFTKLFKKKSSR) are enriched in basic residues.

It localises to the cell membrane. May be involved in the control of meiotic sister-chromatid recombination. In Saccharomyces cerevisiae (strain ATCC 204508 / S288c) (Baker's yeast), this protein is Meiotic sister-chromatid recombination protein 3 (MSC3).